The following is a 310-amino-acid chain: tRNA dimethylallyltransferase (310 aa).

12-19 lines the ATP pocket; the sequence is GPTATGKT. Residue 14–19 coordinates substrate; it reads TATGKT. The tract at residues 37–40 is interaction with substrate tRNA; that stretch reads DSMM.

This sequence belongs to the IPP transferase family. As to quaternary structure, monomer. It depends on Mg(2+) as a cofactor.

The catalysed reaction is adenosine(37) in tRNA + dimethylallyl diphosphate = N(6)-dimethylallyladenosine(37) in tRNA + diphosphate. Its function is as follows. Catalyzes the transfer of a dimethylallyl group onto the adenine at position 37 in tRNAs that read codons beginning with uridine, leading to the formation of N6-(dimethylallyl)adenosine (i(6)A). This is tRNA dimethylallyltransferase from Desulforudis audaxviator (strain MP104C).